We begin with the raw amino-acid sequence, 448 residues long: Inositol polyphosphate 5-phosphatase K (448 aa).

Positions 16–318 (IHVVTWNVAS…SDHKPVSGTF (303 aa)) are catalytic. The interval 318–448 (FDLELKPLVS…DPLGEAQPQI (131 aa)) is required for interaction with GPR78 and PAK1. The segment at 321-448 (ELKPLVSAPL…DPLGEAQPQI (128 aa)) is required for ruffle localization.

Belongs to the inositol 1,4,5-trisphosphate 5-phosphatase type II family. Interacts with GPR78; necessary for INPP5K localization at the endoplasmic reticulum. Interacts with PAK1; competes with GPR78. In terms of tissue distribution, ubiquitously expressed with highest levels in skeletal muscle, heart and kidney.

It localises to the endoplasmic reticulum. The protein localises to the cytoplasm. The enzyme catalyses 1D-myo-inositol 1,4,5-trisphosphate + H2O = 1D-myo-inositol 1,4-bisphosphate + phosphate. The catalysed reaction is 1D-myo-inositol 1,3,4,5-tetrakisphosphate + H2O = 1D-myo-inositol 1,3,4-trisphosphate + phosphate. It carries out the reaction a 1,2-diacyl-sn-glycero-3-phospho-(1D-myo-inositol-4,5-bisphosphate) + H2O = a 1,2-diacyl-sn-glycero-3-phospho-(1D-myo-inositol 4-phosphate) + phosphate. It catalyses the reaction a 1,2-diacyl-sn-glycero-3-phospho-(1D-myo-inositol-3,4,5-trisphosphate) + H2O = a 1,2-diacyl-sn-glycero-3-phospho-(1D-myo-inositol-3,4-bisphosphate) + phosphate. The enzyme catalyses 1,2-dioctanoyl-sn-glycero-3-phospho-(1D-myo-inositol-3,4,5-trisphosphate) + H2O = 1,2-dioctanoyl-sn-glycero-3-phospho-(1D-myo-inositol-3,4-bisphosphate) + phosphate. Its function is as follows. Inositol 5-phosphatase which acts on inositol 1,4,5-trisphosphate, inositol 1,3,4,5-tetrakisphosphate, phosphatidylinositol 4,5-bisphosphate and phosphatidylinositol 3,4,5-trisphosphate. Has 6-fold higher affinity for phosphatidylinositol 4,5-bisphosphate than for inositol 1,4,5-trisphosphate. Negatively regulates assembly of the actin cytoskeleton. Controls insulin-dependent glucose uptake among inositol 3,4,5-trisphosphate phosphatases; therefore, is the specific regulator for insulin signaling in skeletal muscle. The sequence is that of Inositol polyphosphate 5-phosphatase K from Homo sapiens (Human).